A 197-amino-acid chain; its full sequence is Small ribosomal subunit protein uS4y (197 aa).

Positions 109 to 183 constitute an S4 RNA-binding domain; the sequence is RRLQTIVFKS…VKRRNERAGA (75 aa). The segment at 161–197 is disordered; it reads SLTSPFGGGRPGRVKRRNERAGAKKASGGDGDEDDEE.

The protein belongs to the universal ribosomal protein uS4 family. In terms of assembly, binds to the translation initiation factors TIF3E1.

The polypeptide is Small ribosomal subunit protein uS4y (RPS9C) (Arabidopsis thaliana (Mouse-ear cress)).